Reading from the N-terminus, the 700-residue chain is Acetoacetyl-CoA synthetase (700 aa).

The disordered stretch occupies residues 1-35 (MTAVSANGKTTEKHENGAHTNGTTNGTTNGSMNGN). The segment covering 18 to 35 (AHTNGTTNGTTNGSMNGN) has biased composition (low complexity).

Belongs to the ATP-dependent AMP-binding enzyme family. Present in most cells of the organism.

Its subcellular location is the cytoplasm. The protein localises to the nucleus. The enzyme catalyses acetoacetate + ATP + CoA = acetoacetyl-CoA + AMP + diphosphate. Functionally, activates acetoacetate to acetoacetyl-CoA. Negatively regulates let-60 Ras activity during vulval induction. This Caenorhabditis elegans protein is Acetoacetyl-CoA synthetase (sur-5).